Here is a 330-residue protein sequence, read N- to C-terminus: GRB2-related adapter protein 2 (330 aa).

An SH3 1 domain is found at 1-56; sequence MEAVAKFDFTASGEDELSFHTGDVLKILSNQEEWFKAELGSQEGYVPKNFIDIQFP. At Tyr-45 the chain carries Phosphotyrosine. The region spanning 58 to 149 is the SH2 domain; sequence WFHEGLSRHQ…QKQIFLRDRT (92 aa). Position 106 is an N6-acetyllysine (Lys-106). Residues 143-244 form a disordered region; sequence IFLRDRTRED…GSLDINDGHC (102 aa). Positions 144–164 are enriched in basic and acidic residues; that stretch reads FLRDRTREDQGHRGNSLDRRS. The residue at position 187 (Ser-187) is a Phosphoserine. The span at 209-222 shows a compositional bias: low complexity; the sequence is PAPQQLQQPPQQRY. A Phosphoserine modification is found at Ser-236. Thr-262 carries the phosphothreonine modification. One can recognise an SH3 2 domain in the interval 271–330; the sequence is GRVRWARALYDFEALEDDELGFHSGEVVEVLDSSNPSWWTGRLHNKLGLFPANYVAPMTR.

It belongs to the GRB2/sem-5/DRK family. As to quaternary structure, interacts with phosphorylated LIME1 upon TCR activation. Interacts with phosphorylated LAT and LAX1 upon TCR activation. Interacts with SHB. Interacts with PTPN23.

It localises to the nucleus. The protein resides in the cytoplasm. Its subcellular location is the endosome. In terms of biological role, interacts with SLP-76 to regulate NF-AT activation. Binds to tyrosine-phosphorylated shc. The protein is GRB2-related adapter protein 2 (GRAP2) of Homo sapiens (Human).